We begin with the raw amino-acid sequence, 192 residues long: dTTP/UTP pyrophosphatase (192 aa).

Catalysis depends on D70, which acts as the Proton acceptor.

It belongs to the Maf family. YhdE subfamily. A divalent metal cation serves as cofactor.

It localises to the cytoplasm. The enzyme catalyses dTTP + H2O = dTMP + diphosphate + H(+). It catalyses the reaction UTP + H2O = UMP + diphosphate + H(+). Its function is as follows. Nucleoside triphosphate pyrophosphatase that hydrolyzes dTTP and UTP. May have a dual role in cell division arrest and in preventing the incorporation of modified nucleotides into cellular nucleic acids. The chain is dTTP/UTP pyrophosphatase from Clostridium perfringens (strain SM101 / Type A).